Here is a 119-residue protein sequence, read N- to C-terminus: Lamprin 1.8-10 (119 aa).

An N-terminal signal peptide occupies residues 1-19; sequence MAATMQALLVIALLHLATA. 7 repeat units span residues 41-45, 46-50, 51-55, 56-60, 61-65, 66-70, and 86-90. A 7 X 5 AA approximate repeats region spans residues 41–90; it reads GGLGYGGLGYGGLGYGGLGVAGLGYGGLGYPGAALGGAYTHHAALGGLGY.

In terms of assembly, the polymeric lamprin chains self-aggregate to form fibers and have secondary structures particularly rich in beta-sheets and in beta-turns.

The protein resides in the secreted. Its subcellular location is the extracellular space. It is found in the extracellular matrix. Functionally, self-aggregating protein that is part of the soluble form of lamprin. The sequence is that of Lamprin 1.8-10 from Petromyzon marinus (Sea lamprey).